The following is a 105-amino-acid chain: Cuticle protein AMP1B (105 aa).

Residues 1–21 (DRDAQTLTDERSDQGDGNFRY) form a disordered region. A Chitin-binding type R&amp;R domain is found at 16 to 81 (DGNFRYEFET…PSSDLLPVPP (66 aa)).

As to expression, arthrodial membrane.

The sequence is that of Cuticle protein AMP1B from Homarus americanus (American lobster).